The chain runs to 283 residues: Bifunctional protein FolD (283 aa).

Residues 164 to 166 (GRS), S189, and I230 contribute to the NADP(+) site.

It belongs to the tetrahydrofolate dehydrogenase/cyclohydrolase family. In terms of assembly, homodimer.

The enzyme catalyses (6R)-5,10-methylene-5,6,7,8-tetrahydrofolate + NADP(+) = (6R)-5,10-methenyltetrahydrofolate + NADPH. The catalysed reaction is (6R)-5,10-methenyltetrahydrofolate + H2O = (6R)-10-formyltetrahydrofolate + H(+). It functions in the pathway one-carbon metabolism; tetrahydrofolate interconversion. Functionally, catalyzes the oxidation of 5,10-methylenetetrahydrofolate to 5,10-methenyltetrahydrofolate and then the hydrolysis of 5,10-methenyltetrahydrofolate to 10-formyltetrahydrofolate. In Pelobacter propionicus (strain DSM 2379 / NBRC 103807 / OttBd1), this protein is Bifunctional protein FolD.